The primary structure comprises 141 residues: Large ribosomal subunit protein uL11 (141 aa).

This sequence belongs to the universal ribosomal protein uL11 family. Part of the ribosomal stalk of the 50S ribosomal subunit. Interacts with L10 and the large rRNA to form the base of the stalk. L10 forms an elongated spine to which L12 dimers bind in a sequential fashion forming a multimeric L10(L12)X complex. Post-translationally, one or more lysine residues are methylated.

Functionally, forms part of the ribosomal stalk which helps the ribosome interact with GTP-bound translation factors. In Nostoc punctiforme (strain ATCC 29133 / PCC 73102), this protein is Large ribosomal subunit protein uL11.